The primary structure comprises 538 residues: Putative outer membrane porin BglH (538 aa).

A signal peptide spans 1 to 25; sequence MFRRNIITSAILLMAPLAFSAQSLA.

The protein belongs to the porin LamB (TC 1.B.3) family.

The protein localises to the cell outer membrane. Its function is as follows. May be a sugar porin with a broad carbohydrate specificity. In Escherichia coli O6:K15:H31 (strain 536 / UPEC), this protein is Putative outer membrane porin BglH (bglH).